A 347-amino-acid chain; its full sequence is S-adenosylmethionine:tRNA ribosyltransferase-isomerase (347 aa).

This sequence belongs to the QueA family. As to quaternary structure, monomer.

The protein resides in the cytoplasm. The enzyme catalyses 7-aminomethyl-7-carbaguanosine(34) in tRNA + S-adenosyl-L-methionine = epoxyqueuosine(34) in tRNA + adenine + L-methionine + 2 H(+). Its pathway is tRNA modification; tRNA-queuosine biosynthesis. Functionally, transfers and isomerizes the ribose moiety from AdoMet to the 7-aminomethyl group of 7-deazaguanine (preQ1-tRNA) to give epoxyqueuosine (oQ-tRNA). The polypeptide is S-adenosylmethionine:tRNA ribosyltransferase-isomerase (Methylococcus capsulatus (strain ATCC 33009 / NCIMB 11132 / Bath)).